We begin with the raw amino-acid sequence, 475 residues long: U3 small nucleolar RNA-interacting protein 2 (475 aa).

Residues 1-75 are disordered; that stretch reads MSATAAARKR…EEEEELEETA (75 aa). A Nuclear localization signal motif is present at residues 8–40; it reads RKRGKPASGAGAGAGAGKRRRKADSAGDRGKSK. Arginine 10 is modified (omega-N-methylarginine). Residues lysine 12 and lysine 25 each carry the N6-acetyllysine modification. 4 positions are modified to phosphoserine: serine 50, serine 51, serine 53, and serine 57. The segment covering 65-74 has biased composition (acidic residues); the sequence is EEEEEELEET. A Glycyl lysine isopeptide (Lys-Gly) (interchain with G-Cter in SUMO2) cross-link involves residue lysine 113. WD repeat units follow at residues 144-183, 197-236, 239-278, 281-320, 322-360, 374-413, and 419-460; these read GHQLSITCLVVTPDDSAIFSAAKDCSIIKWSVESGRKLHV, GHSSHVLCMAISSDGKYLASGDRSKLILIWEAQSCQHLYT, GHRDAVSGLAFRRGTHQLYSTSHDRSVKVWNVAENSYVET, GHQDAVAALDALSRECCVTAGGRDGTVRVWKIPEESQLVF, GHQGSIDCIHLINEEHMVSGADDGSVALWGLSKKRPLAL, EQPFWISSVAALLNTDLVATGSHSSCVRLWQCGEGFRQLD, and PLVG…NSVC.

It belongs to the WD repeat RRP9 family. As to quaternary structure, interacts specifically with the U3 small nucleolar RNA (U3 snoRNA). Binds a sub-fragment of the U3 snoRNA surrounding the B/C motif (3UBC). This association with the U3BC RNA is dependent on the binding of a protein called 15.5K to the box B/C motif. The association of the protein with the U3BC RNA was found to be also dependent on a conserved RNA structure that flanks the box B/C motif. Part of the small subunit (SSU) processome, composed of more than 70 proteins and the RNA chaperone small nucleolar RNA (snoRNA) U3. Post-translationally, acetylation at Lys-12 and Lys-25 by KAT2B/PCAF under stress impairs pre-rRNA processing. Deacetylation by SIRT7 enhances RRP9-binding to U3 snoRNA, which is a prerequisite for pre-rRNA processing.

The protein resides in the nucleus. It is found in the nucleolus. Functionally, component of a nucleolar small nuclear ribonucleoprotein particle (snoRNP) thought to participate in the processing and modification of pre-ribosomal RNA (pre-rRNA). Part of the small subunit (SSU) processome, first precursor of the small eukaryotic ribosomal subunit. During the assembly of the SSU processome in the nucleolus, many ribosome biogenesis factors, an RNA chaperone and ribosomal proteins associate with the nascent pre-rRNA and work in concert to generate RNA folding, modifications, rearrangements and cleavage as well as targeted degradation of pre-ribosomal RNA by the RNA exosome. This is U3 small nucleolar RNA-interacting protein 2 from Homo sapiens (Human).